The sequence spans 287 residues: ATP synthase gamma chain (287 aa).

Belongs to the ATPase gamma chain family. F-type ATPases have 2 components, CF(1) - the catalytic core - and CF(0) - the membrane proton channel. CF(1) has five subunits: alpha(3), beta(3), gamma(1), delta(1), epsilon(1). CF(0) has three main subunits: a, b and c.

The protein localises to the cell inner membrane. Its function is as follows. Produces ATP from ADP in the presence of a proton gradient across the membrane. The gamma chain is believed to be important in regulating ATPase activity and the flow of protons through the CF(0) complex. In Colwellia maris, this protein is ATP synthase gamma chain.